Reading from the N-terminus, the 347-residue chain is D-alanine--D-alanine ligase (347 aa).

Residues 134-332 form the ATP-grasp domain; that stretch reads KLYAKDLGVK…LAQSLPKTPK (199 aa). 161 to 216 is an ATP binding site; that stretch reads LMNFNFPFIIKPNNAGSSLGVNVVKEEKELVYALDGAFEYSKEVLIEPFIQGVKEY. Residues aspartate 288, glutamate 300, and asparagine 302 each coordinate Mg(2+).

This sequence belongs to the D-alanine--D-alanine ligase family. Requires Mg(2+) as cofactor. It depends on Mn(2+) as a cofactor.

Its subcellular location is the cytoplasm. The enzyme catalyses 2 D-alanine + ATP = D-alanyl-D-alanine + ADP + phosphate + H(+). Its pathway is cell wall biogenesis; peptidoglycan biosynthesis. Cell wall formation. This chain is D-alanine--D-alanine ligase, found in Helicobacter pylori (strain ATCC 700392 / 26695) (Campylobacter pylori).